We begin with the raw amino-acid sequence, 156 residues long: Small ribosomal subunit protein uS7 (156 aa).

It belongs to the universal ribosomal protein uS7 family. Part of the 30S ribosomal subunit. Contacts proteins S9 and S11.

Functionally, one of the primary rRNA binding proteins, it binds directly to 16S rRNA where it nucleates assembly of the head domain of the 30S subunit. Is located at the subunit interface close to the decoding center, probably blocks exit of the E-site tRNA. The chain is Small ribosomal subunit protein uS7 from Paramagnetospirillum magneticum (strain ATCC 700264 / AMB-1) (Magnetospirillum magneticum).